The sequence spans 407 residues: Imidazolonepropionase (407 aa).

Fe(3+) is bound by residues His74 and His76. Zn(2+)-binding residues include His74 and His76. Residues Arg83, Tyr146, and His179 each contribute to the 4-imidazolone-5-propanoate site. Residue Tyr146 participates in N-formimidoyl-L-glutamate binding. Residue His244 participates in Fe(3+) binding. Residue His244 participates in Zn(2+) binding. Gln247 contacts 4-imidazolone-5-propanoate. Residue Asp319 participates in Fe(3+) binding. Asp319 is a Zn(2+) binding site. N-formimidoyl-L-glutamate is bound by residues Asn321 and Gly323. Thr324 contacts 4-imidazolone-5-propanoate.

Belongs to the metallo-dependent hydrolases superfamily. HutI family. It depends on Zn(2+) as a cofactor. The cofactor is Fe(3+).

It is found in the cytoplasm. It catalyses the reaction 4-imidazolone-5-propanoate + H2O = N-formimidoyl-L-glutamate. It participates in amino-acid degradation; L-histidine degradation into L-glutamate; N-formimidoyl-L-glutamate from L-histidine: step 3/3. Its function is as follows. Catalyzes the hydrolytic cleavage of the carbon-nitrogen bond in imidazolone-5-propanoate to yield N-formimidoyl-L-glutamate. It is the third step in the universal histidine degradation pathway. The chain is Imidazolonepropionase from Salmonella paratyphi C (strain RKS4594).